Here is a 337-residue protein sequence, read N- to C-terminus: DNA-directed RNA polymerase subunit alpha (337 aa).

An alpha N-terminal domain (alpha-NTD) region spans residues M1–N223. The interval S238–E337 is alpha C-terminal domain (alpha-CTD).

The protein belongs to the RNA polymerase alpha chain family. As to quaternary structure, homodimer. The RNAP catalytic core consists of 2 alpha, 1 beta, 1 beta' and 1 omega subunit. When a sigma factor is associated with the core the holoenzyme is formed, which can initiate transcription.

The enzyme catalyses RNA(n) + a ribonucleoside 5'-triphosphate = RNA(n+1) + diphosphate. DNA-dependent RNA polymerase catalyzes the transcription of DNA into RNA using the four ribonucleoside triphosphates as substrates. The protein is DNA-directed RNA polymerase subunit alpha of Corynebacterium jeikeium (strain K411).